Here is a 1335-residue protein sequence, read N- to C-terminus: Restriction of telomere capping protein 1 (1335 aa).

The interval 1–39 is disordered; the sequence is MSLSPHVENASIPKGSTPIPKNRNVSSIGKGEFLGSSSS. WD repeat units follow at residues 207-248, 256-296, 305-342, 367-406, 439-486, and 489-527; these read NKFS…SIDN, EHTR…SKSS, TASD…YKFA, AHTG…NAAE, NTGY…IPKH, and LSET…TVLE. Disordered stretches follow at residues 559-593, 600-619, 630-651, 736-758, and 783-824; these read PELQ…IGGI, TGLT…GPTF, ASSF…ENRE, KNAT…DDDD, and NEKV…DRSR. The span at 630–644 shows a compositional bias: low complexity; that stretch reads ASSFNSSSASLTSLT. Over residues 808–817 the composition is skewed to low complexity; sequence SSISSISASR. Residues 844-884 form a WD 7 repeat; it reads LISIATHNASVYLSIDDLTNFKIWILIRDSLLWDLKWMTSS. Disordered stretches follow at residues 935–956 and 1007–1037; these read AFRA…KLKE and DEHE…KSIP. Composition is skewed to basic and acidic residues over residues 945-956 and 1009-1021; these read DAEKKPVSKLKE and HEHQ…HDSP. S1030, S1074, S1081, S1083, S1117, and S1127 each carry phosphoserine. WD repeat units follow at residues 1130–1170 and 1217–1256; these read REQL…TETG and VLKY…KEKL. The RING-type; degenerate zinc finger occupies 1294–1335; that stretch reads LKKLTMVILPCGHEGHFQCIQEWFLDENEQECPGGCPGVAFI.

This sequence belongs to the WD repeat RTC1 family.

It is found in the vacuole. Its function is as follows. May be involved in a process influencing telomere capping. In Saccharomyces cerevisiae (strain YJM789) (Baker's yeast), this protein is Restriction of telomere capping protein 1 (RTC1).